A 486-amino-acid polypeptide reads, in one-letter code: Cardiolipin synthase A (486 aa).

2 helical membrane passes run 3–23 (TFYT…IAGV) and 38–58 (MAWL…YLSV). 2 consecutive PLD phosphodiesterase domains span residues 219–246 (MDLR…VDPR) and 399–426 (EGGL…DMRS). Active-site residues include His224, Lys226, Asp231, His404, Lys406, and Asp411.

It belongs to the phospholipase D family. Cardiolipin synthase subfamily. ClsA sub-subfamily.

It is found in the cell inner membrane. It catalyses the reaction 2 a 1,2-diacyl-sn-glycero-3-phospho-(1'-sn-glycerol) = a cardiolipin + glycerol. Catalyzes the reversible phosphatidyl group transfer from one phosphatidylglycerol molecule to another to form cardiolipin (CL) (diphosphatidylglycerol) and glycerol. In Salmonella choleraesuis (strain SC-B67), this protein is Cardiolipin synthase A.